Consider the following 208-residue polypeptide: Molybdenum cofactor guanylyltransferase (208 aa).

Residues 10 to 12 (LAG), Lys23, Asp69, and Asp103 each bind GTP. Asp103 contributes to the Mg(2+) binding site.

The protein belongs to the MobA family. As to quaternary structure, monomer. It depends on Mg(2+) as a cofactor.

It is found in the cytoplasm. It carries out the reaction Mo-molybdopterin + GTP + H(+) = Mo-molybdopterin guanine dinucleotide + diphosphate. Its function is as follows. Transfers a GMP moiety from GTP to Mo-molybdopterin (Mo-MPT) cofactor (Moco or molybdenum cofactor) to form Mo-molybdopterin guanine dinucleotide (Mo-MGD) cofactor. The sequence is that of Molybdenum cofactor guanylyltransferase from Mesorhizobium japonicum (strain LMG 29417 / CECT 9101 / MAFF 303099) (Mesorhizobium loti (strain MAFF 303099)).